Here is a 728-residue protein sequence, read N- to C-terminus: 1,4-alpha-glucan branching enzyme GlgB (728 aa).

Aspartate 405 functions as the Nucleophile in the catalytic mechanism. Residue glutamate 458 is the Proton donor of the active site.

This sequence belongs to the glycosyl hydrolase 13 family. GlgB subfamily. As to quaternary structure, monomer.

It catalyses the reaction Transfers a segment of a (1-&gt;4)-alpha-D-glucan chain to a primary hydroxy group in a similar glucan chain.. The protein operates within glycan biosynthesis; glycogen biosynthesis. In terms of biological role, catalyzes the formation of the alpha-1,6-glucosidic linkages in glycogen by scission of a 1,4-alpha-linked oligosaccharide from growing alpha-1,4-glucan chains and the subsequent attachment of the oligosaccharide to the alpha-1,6 position. The polypeptide is 1,4-alpha-glucan branching enzyme GlgB (Salmonella arizonae (strain ATCC BAA-731 / CDC346-86 / RSK2980)).